The chain runs to 538 residues: Histone-arginine methyltransferase CARMER (538 aa).

The 310-residue stretch at 148 to 457 (ASQYFQFYGY…QSYDVTIDLH (310 aa)) folds into the SAM-dependent MTase PRMT-type domain. Positions 161, 170, 194, 216, 245, and 273 each coordinate S-adenosyl-L-methionine. An Asymmetric dimethylarginine; by autocatalysis modification is found at Arg508.

Belongs to the class I-like SAM-binding methyltransferase superfamily. Protein arginine N-methyltransferase family. As to quaternary structure, homodimer. The dimethylated protein is the major form.

Its subcellular location is the cytoplasm. It is found in the nucleus. It carries out the reaction L-arginyl-[protein] + 2 S-adenosyl-L-methionine = N(omega),N(omega)-dimethyl-L-arginyl-[protein] + 2 S-adenosyl-L-homocysteine + 2 H(+). Methylates (mono- and asymmetric dimethylation) the guanidino nitrogens of arginyl residues in proteins. May methylate histone H3 at 'Arg-17' and activate transcription via chromatin remodeling. The sequence is that of Histone-arginine methyltransferase CARMER (Art4) from Drosophila virilis (Fruit fly).